We begin with the raw amino-acid sequence, 106 residues long: SH3 domain-binding glutamic acid-rich-like protein 2-B (106 aa).

Residues 61 to 67 (QGNPLPP) carry the SH3-binding motif.

This sequence belongs to the SH3BGR family.

The protein localises to the nucleus. The polypeptide is SH3 domain-binding glutamic acid-rich-like protein 2-B (sh3bgrl2-b) (Xenopus laevis (African clawed frog)).